The following is a 331-amino-acid chain: Ferredoxin--NADP reductase 2 (331 aa).

Positions 37, 45, 50, 90, 124, 285, and 326 each coordinate FAD.

The protein belongs to the ferredoxin--NADP reductase type 2 family. In terms of assembly, homodimer. FAD serves as cofactor.

It carries out the reaction 2 reduced [2Fe-2S]-[ferredoxin] + NADP(+) + H(+) = 2 oxidized [2Fe-2S]-[ferredoxin] + NADPH. The chain is Ferredoxin--NADP reductase 2 from Bacillus velezensis (strain DSM 23117 / BGSC 10A6 / LMG 26770 / FZB42) (Bacillus amyloliquefaciens subsp. plantarum).